Reading from the N-terminus, the 269-residue chain is Tryptophan synthase alpha chain (269 aa).

Catalysis depends on proton acceptor residues Glu-49 and Asp-60.

It belongs to the TrpA family. In terms of assembly, tetramer of two alpha and two beta chains.

It catalyses the reaction (1S,2R)-1-C-(indol-3-yl)glycerol 3-phosphate + L-serine = D-glyceraldehyde 3-phosphate + L-tryptophan + H2O. Its pathway is amino-acid biosynthesis; L-tryptophan biosynthesis; L-tryptophan from chorismate: step 5/5. Functionally, the alpha subunit is responsible for the aldol cleavage of indoleglycerol phosphate to indole and glyceraldehyde 3-phosphate. This chain is Tryptophan synthase alpha chain, found in Ectopseudomonas mendocina (strain ymp) (Pseudomonas mendocina).